We begin with the raw amino-acid sequence, 438 residues long: uncharacterized protein (438 aa).

Zn(2+) is bound at residue His59. Glu62 serves as the catalytic Proton acceptor. 2 residues coordinate Zn(2+): His63 and Glu139.

Belongs to the peptidase M16 family. Zn(2+) is required as a cofactor.

This is an uncharacterized protein from Mycobacterium tuberculosis (strain CDC 1551 / Oshkosh).